The sequence spans 258 residues: tRNA (guanine-N(1)-)-methyltransferase (258 aa).

S-adenosyl-L-methionine is bound by residues Gly-122 and 142-147 (LGDFVL).

Belongs to the RNA methyltransferase TrmD family. As to quaternary structure, homodimer.

The protein localises to the cytoplasm. The enzyme catalyses guanosine(37) in tRNA + S-adenosyl-L-methionine = N(1)-methylguanosine(37) in tRNA + S-adenosyl-L-homocysteine + H(+). Specifically methylates guanosine-37 in various tRNAs. The polypeptide is tRNA (guanine-N(1)-)-methyltransferase (Hahella chejuensis (strain KCTC 2396)).